We begin with the raw amino-acid sequence, 318 residues long: Taste receptor type 2 member 14 (318 aa).

Residues 1–7 (MGGVIKN) lie on the Extracellular side of the membrane. The chain crosses the membrane as a helical span at residues 8–28 (ISTFVLIVEFIIGNLGNSFIA). The Cytoplasmic segment spans residues 29–55 (LVNCIDWVKRRKISLVDQLLTALAISR). A helical membrane pass occupies residues 56-76 (ISLVWLIFGSWCVSAFFPALF). Residues 77–87 (ATEKMFRMLTN) lie on the Extracellular side of the membrane. T86 and W89 together coordinate cholesterol. The chain crosses the membrane as a helical span at residues 88-108 (IWAVTNHFSVWLATGLGTFYF). Topologically, residues 109–129 (LKIANFSNSIFIYLKWRVKKV) are cytoplasmic. The chain crosses the membrane as a helical span at residues 130–150 (VLVLLLVTSVFLFLNIALINI). Over 151-184 (HINASINGYGGNKTCSSDSNDFTRFSSLIALTSS) the chain is Extracellular. Residues N153 and N162 are each glycosylated (N-linked (GlcNAc...) asparagine). A180 contributes to the cholesterol binding site. The helical transmembrane segment at 185 to 205 (VFIFIPFILSLAIFLLLTFSL) threads the bilayer. Residues 206–232 (WKHCKKMQHTVKASGDASTKAHRGVMQ) are Cytoplasmic-facing. A helical transmembrane segment spans residues 233–253 (TVIAFLLLYPIFSLSFFIAVW). Residues 254–261 (TSGWLEEN) lie on the Extracellular side of the membrane. A helical membrane pass occupies residues 262–282 (LIILSQVMGMAYPSCHSCILI). Positions 265 and 268 each coordinate cholesterol. Over 283–317 (LGNKKLRQASLSVLWWLKYRFKDGEPSGHKGFRES) the chain is Cytoplasmic.

Belongs to the G-protein coupled receptor T2R family. As to quaternary structure, core component of the TAS2R14-GNAI1 complex, consisting of TAS2R14, GNAI1, GNB1 and GNG2; within the complex interacts with GNAI1. Core component of the TAS2R14-GNAT3 complex, consisting of TAS2R14, GNAT3, GNB1 and GNG2; within the complex interacts with GNAT3. Core component of the TAS2R14-GNAS2 complex, consisting of TAS2R14, GNAS2, GNB1 and GNG2; within the complex interacts with GNAS2.

The protein localises to the membrane. The catalysed reaction is Ca(2+)(in) = Ca(2+)(out). It carries out the reaction 3',5'-cyclic AMP(in) = 3',5'-cyclic AMP(out). Its activity is regulated as follows. Basal activity is enhanced by binding to bitter tastants, such as flufenamic acid and aristolochic acid. Regulated by cholesterol in a concentration-dependent manner. Gustducin-linked G-protein coupled receptor that plays a role in the perception of bitterness. The activity of this receptor stimulates GNAT3, activating the gustducin G-protein pathway. Likely plays a role in sensing the chemical composition of the gastrointestinal content and other extra-oral tissues via the inhibitory G-protein pathways. The sequence is that of Taste receptor type 2 member 14 (TAS2R14) from Pongo pygmaeus (Bornean orangutan).